The primary structure comprises 526 residues: GMP synthase [glutamine-hydrolyzing] (526 aa).

The region spanning 4-204 (KIVVLDFGSQ…AHAICGCSGD (201 aa)) is the Glutamine amidotransferase type-1 domain. Catalysis depends on C87, which acts as the Nucleophile. Residues H178 and E180 contribute to the active site. Positions 205 to 401 (WTPASFVEEQ…LDVPDPIVGR (197 aa)) constitute a GMPS ATP-PPase domain. Residue 232–238 (SGGVDSS) participates in ATP binding.

In terms of assembly, homodimer.

It carries out the reaction XMP + L-glutamine + ATP + H2O = GMP + L-glutamate + AMP + diphosphate + 2 H(+). Its pathway is purine metabolism; GMP biosynthesis; GMP from XMP (L-Gln route): step 1/1. Catalyzes the synthesis of GMP from XMP. The sequence is that of GMP synthase [glutamine-hydrolyzing] from Salinibacter ruber (strain DSM 13855 / M31).